Consider the following 510-residue polypeptide: 2,3-bisphosphoglycerate-independent phosphoglycerate mutase (510 aa).

Mn(2+) contacts are provided by Asp11 and Ser61. Ser61 (phosphoserine intermediate) is an active-site residue. Residues His124, 154 to 155 (RD), Arg185, Arg191, 260 to 263 (RPDR), and Lys333 contribute to the substrate site. The Mn(2+) site is built by Asp398, His402, Asp439, His440, and His457.

It belongs to the BPG-independent phosphoglycerate mutase family. In terms of assembly, monomer. Mn(2+) is required as a cofactor.

The enzyme catalyses (2R)-2-phosphoglycerate = (2R)-3-phosphoglycerate. It functions in the pathway carbohydrate degradation; glycolysis; pyruvate from D-glyceraldehyde 3-phosphate: step 3/5. In terms of biological role, catalyzes the interconversion of 2-phosphoglycerate and 3-phosphoglycerate. This Mycoplasma mobile (strain ATCC 43663 / 163K / NCTC 11711) (Mesomycoplasma mobile) protein is 2,3-bisphosphoglycerate-independent phosphoglycerate mutase.